A 418-amino-acid chain; its full sequence is Zinc finger protein 566 (418 aa).

The KRAB domain maps to 6-77; sequence VMFSDVSVDF…DRELTRGQWP (72 aa). The segment at 169–193 adopts a C2H2-type 1; degenerate zinc-finger fold; sequence KFCASKEYRKTFRHGSQFATHEIIH. C2H2-type zinc fingers lie at residues 199–221, 227–249, 255–277, 283–305, 311–333, 339–361, and 367–389; these read YECKECGKSFRHPSRLTHHQKIH, FECKECGKTFICGSDLTRHHRIH, YECKECGKAFSSGSNFTRHQRIH, YECKECGKAFSSGSNFTQHQRIH, YECKECGNAFSQSSQLIKHQRIH, YECKECEKAFRSGSDLTRHQRIH, and YECKICGKAYSQSSQLISHHRIH. Residues lysine 314 and lysine 328 each participate in a glycyl lysine isopeptide (Lys-Gly) (interchain with G-Cter in SUMO2) cross-link.

The protein belongs to the krueppel C2H2-type zinc-finger protein family.

Its subcellular location is the nucleus. May be involved in transcriptional regulation. This Homo sapiens (Human) protein is Zinc finger protein 566 (ZNF566).